Reading from the N-terminus, the 24-residue chain is Unknown protein NF004 from 2D-PAGE (24 aa).

The chain is Unknown protein NF004 from 2D-PAGE from Naegleria fowleri (Brain eating amoeba).